The chain runs to 439 residues: Xylose isomerase (439 aa).

Residues His-99 and Asp-102 contribute to the active site. Residues Glu-230, Glu-266, His-269, Asp-294, Asp-305, Asp-307, and Asp-337 each contribute to the Mg(2+) site.

This sequence belongs to the xylose isomerase family. In terms of assembly, homotetramer. It depends on Mg(2+) as a cofactor.

It is found in the cytoplasm. The enzyme catalyses alpha-D-xylose = alpha-D-xylulofuranose. In Oceanobacillus iheyensis (strain DSM 14371 / CIP 107618 / JCM 11309 / KCTC 3954 / HTE831), this protein is Xylose isomerase.